The chain runs to 247 residues: ATP synthase subunit a, chloroplastic (247 aa).

A run of 5 helical transmembrane segments spans residues 38–58 (QVLI…IIAV), 95–115 (VPFI…GALL), 134–154 (INTT…AGLT), 199–219 (LVVV…VMFL), and 220–240 (GLFT…AYIG).

It belongs to the ATPase A chain family. In terms of assembly, F-type ATPases have 2 components, CF(1) - the catalytic core - and CF(0) - the membrane proton channel. CF(1) has five subunits: alpha(3), beta(3), gamma(1), delta(1), epsilon(1). CF(0) has four main subunits: a, b, b' and c.

The protein resides in the plastid. It is found in the chloroplast thylakoid membrane. Key component of the proton channel; it plays a direct role in the translocation of protons across the membrane. This is ATP synthase subunit a, chloroplastic from Carica papaya (Papaya).